A 324-amino-acid polypeptide reads, in one-letter code: Anthranilate phosphoribosyltransferase (324 aa).

Residues G72, 75 to 76 (GD), T80, 82 to 85 (NVST), 99 to 107 (KHGNVSVTS), and S111 each bind 5-phospho-alpha-D-ribose 1-diphosphate. G72 serves as a coordination point for anthranilate. S84 contacts Mg(2+). Position 102 (N102) interacts with anthranilate. R157 contributes to the anthranilate binding site. Residues D215 and E216 each contribute to the Mg(2+) site.

This sequence belongs to the anthranilate phosphoribosyltransferase family. As to quaternary structure, homodimer. It depends on Mg(2+) as a cofactor.

It catalyses the reaction N-(5-phospho-beta-D-ribosyl)anthranilate + diphosphate = 5-phospho-alpha-D-ribose 1-diphosphate + anthranilate. It participates in amino-acid biosynthesis; L-tryptophan biosynthesis; L-tryptophan from chorismate: step 2/5. Catalyzes the transfer of the phosphoribosyl group of 5-phosphorylribose-1-pyrophosphate (PRPP) to anthranilate to yield N-(5'-phosphoribosyl)-anthranilate (PRA). The sequence is that of Anthranilate phosphoribosyltransferase from Pyrococcus furiosus (strain ATCC 43587 / DSM 3638 / JCM 8422 / Vc1).